The chain runs to 587 residues: Membrane protein insertase YidC (587 aa).

5 consecutive transmembrane segments (helical) span residues 5-25 (SVIG…FMKP), 365-385 (GLII…LSLA), 430-450 (LGGC…FYVF), 480-500 (LPLY…TVFF), and 516-536 (IMIW…PSGL).

This sequence belongs to the OXA1/ALB3/YidC family. Type 1 subfamily. As to quaternary structure, interacts with the Sec translocase complex via SecD. Specifically interacts with transmembrane segments of nascent integral membrane proteins during membrane integration.

The protein localises to the cell inner membrane. Its function is as follows. Required for the insertion and/or proper folding and/or complex formation of integral membrane proteins into the membrane. Involved in integration of membrane proteins that insert both dependently and independently of the Sec translocase complex, as well as at least some lipoproteins. Aids folding of multispanning membrane proteins. The protein is Membrane protein insertase YidC of Chlorobaculum parvum (strain DSM 263 / NCIMB 8327) (Chlorobium vibrioforme subsp. thiosulfatophilum).